The chain runs to 672 residues: NADPH-Fe(3+) oxidoreductase subunit beta (672 aa).

4 residues coordinate [4Fe-4S] cluster: cysteine 203, cysteine 207, cysteine 211, and cysteine 215. 254–283 (KKVAIVGAGPAGLACAYYLALEGYPCTIYE) contributes to the FAD binding site. 388-421 (GKKVVVVGGGNTAIDCVRVALREGAEESTLLYRR) is a binding site for NADP(+). 552 to 562 (TDLEGVFAGGD) serves as a coordination point for FAD.

Heterotetramer with 2 alpha subunits. It depends on [4Fe-4S] cluster as a cofactor. FAD serves as cofactor.

The protein localises to the cell membrane. Probably involved in acetate metabolism and not in the reduction of Fe(3+) chelates. May serve as a major route for NADP regeneration. This Geobacter sulfurreducens (strain DL-1 / KN400) protein is NADPH-Fe(3+) oxidoreductase subunit beta (sfrB).